Here is a 117-residue protein sequence, read N- to C-terminus: Small ribosomal subunit protein bS6m (117 aa).

This sequence belongs to the bacterial ribosomal protein bS6 family. Component of the mitochondrial small ribosomal subunit (mt-SSU). Mature N.crassa 74S mitochondrial ribosomes consist of a small (37S) and a large (54S) subunit. The 37S small subunit contains a 16S ribosomal RNA (16S mt-rRNA) and 32 different proteins. The 54S large subunit contains a 23S rRNA (23S mt-rRNA) and 42 different proteins.

Its subcellular location is the mitochondrion. In terms of biological role, component of the mitochondrial ribosome (mitoribosome), a dedicated translation machinery responsible for the synthesis of mitochondrial genome-encoded proteins, including at least some of the essential transmembrane subunits of the mitochondrial respiratory chain. The mitoribosomes are attached to the mitochondrial inner membrane and translation products are cotranslationally integrated into the membrane. This chain is Small ribosomal subunit protein bS6m (mrp17), found in Neurospora crassa (strain ATCC 24698 / 74-OR23-1A / CBS 708.71 / DSM 1257 / FGSC 987).